We begin with the raw amino-acid sequence, 938 residues long: Translation initiation factor IF-2 (938 aa).

Positions 57 to 205 (DKSKKVASKE…PKSEETKSEE (149 aa)) are enriched in basic and acidic residues. Residues 57–350 (DKSKKVASKE…RSADDLAQQE (294 aa)) form a disordered region. Positions 206–215 (TTEGGESEEK) are enriched in acidic residues. Over residues 248–259 (KKEEKKEDDKKD) the composition is skewed to basic and acidic residues. Composition is skewed to basic residues over residues 260–270 (KDRRKKRRRRI) and 285–296 (GAKKGGRTRSKP). Residues 297–319 (ITKEEPTEEEVQKQVRETLEKLQ) are compositionally biased toward basic and acidic residues. Positions 323–333 (SKGKGAKYRRQ) are enriched in basic residues. Residues 334–344 (KRDEHRQRSAD) show a composition bias toward basic and acidic residues. The region spanning 434–602 (TRAPIVTVMG…KVLLEAEILE (169 aa)) is the tr-type G domain. The tract at residues 443 to 450 (GHVDHGKT) is G1. A GTP-binding site is contributed by 443–450 (GHVDHGKT). Residues 468–472 (GITQH) are G2. Residues 490 to 493 (DTPG) form a G3 region. Residues 490 to 494 (DTPGH) and 544 to 547 (NKSD) contribute to the GTP site. The tract at residues 544-547 (NKSD) is G4. The interval 580-582 (SAK) is G5.

Belongs to the TRAFAC class translation factor GTPase superfamily. Classic translation factor GTPase family. IF-2 subfamily.

Its subcellular location is the cytoplasm. Functionally, one of the essential components for the initiation of protein synthesis. Protects formylmethionyl-tRNA from spontaneous hydrolysis and promotes its binding to the 30S ribosomal subunits. Also involved in the hydrolysis of GTP during the formation of the 70S ribosomal complex. This Christiangramia forsetii (strain DSM 17595 / CGMCC 1.15422 / KT0803) (Gramella forsetii) protein is Translation initiation factor IF-2.